Consider the following 212-residue polypeptide: uncharacterized protein (212 aa).

Residues 47 to 129 are disordered; sequence RELLDRRRSQ…GNIDNGQPRR (83 aa).

This is an uncharacterized protein from Caenorhabditis elegans.